A 143-amino-acid chain; its full sequence is Nucleoside diphosphate kinase (143 aa).

Positions 11, 59, 87, 93, 104, and 114 each coordinate ATP. The active-site Pros-phosphohistidine intermediate is the His-117.

It belongs to the NDK family. In terms of assembly, homotetramer. The cofactor is Mg(2+).

The protein localises to the cytoplasm. It carries out the reaction dZDP + ATP = dZTP + ADP. It catalyses the reaction a 2'-deoxyribonucleoside 5'-diphosphate + ATP = a 2'-deoxyribonucleoside 5'-triphosphate + ADP. The enzyme catalyses a ribonucleoside 5'-diphosphate + ATP = a ribonucleoside 5'-triphosphate + ADP. It participates in purine metabolism. Major role in the synthesis of nucleoside triphosphates other than ATP. The ATP gamma phosphate is transferred to the NDP beta phosphate via a ping-pong mechanism, using a phosphorylated active-site intermediate. Functionally, (Microbial infection) Catalyzes the phosphorylation of dZDP to dZTP, when the bacterium is infected by a phage that produces the substrate for the synthesis of dZTP (2- amino-2'-deoxyadenosine 5'-triphosphate), which is then used by the phage as a DNA polymerase substrate. This Salmonella paratyphi C (strain RKS4594) protein is Nucleoside diphosphate kinase.